We begin with the raw amino-acid sequence, 347 residues long: NADH-ubiquinone oxidoreductase chain 2 (347 aa).

10 helical membrane passes run 1–21 (MNPS…MMVI), 25–45 (HWLL…PIMM), 59–79 (YLLT…INLM), 96–116 (TLMT…FWVP), 122–142 (IPLT…LSIL), 149–169 (INLY…GWGG), 200–220 (LTLL…MLFI), 239–259 (IITT…PLSG), 274–294 (DILI…YFYM), and 325–345 (LLPT…MLSI).

It belongs to the complex I subunit 2 family. In terms of assembly, core subunit of respiratory chain NADH dehydrogenase (Complex I) which is composed of 45 different subunits. Interacts with TMEM242.

The protein localises to the mitochondrion inner membrane. The enzyme catalyses a ubiquinone + NADH + 5 H(+)(in) = a ubiquinol + NAD(+) + 4 H(+)(out). In terms of biological role, core subunit of the mitochondrial membrane respiratory chain NADH dehydrogenase (Complex I) which catalyzes electron transfer from NADH through the respiratory chain, using ubiquinone as an electron acceptor. Essential for the catalytic activity and assembly of complex I. In Balaenoptera musculus (Blue whale), this protein is NADH-ubiquinone oxidoreductase chain 2.